Consider the following 147-residue polypeptide: Large ribosomal subunit protein bL9 (147 aa).

It belongs to the bacterial ribosomal protein bL9 family.

Its function is as follows. Binds to the 23S rRNA. The sequence is that of Large ribosomal subunit protein bL9 from Natranaerobius thermophilus (strain ATCC BAA-1301 / DSM 18059 / JW/NM-WN-LF).